Reading from the N-terminus, the 120-residue chain is Large ribosomal subunit protein bL19 (120 aa).

It belongs to the bacterial ribosomal protein bL19 family.

Functionally, this protein is located at the 30S-50S ribosomal subunit interface and may play a role in the structure and function of the aminoacyl-tRNA binding site. The protein is Large ribosomal subunit protein bL19 of Chlorobium phaeobacteroides (strain DSM 266 / SMG 266 / 2430).